Here is a 258-residue protein sequence, read N- to C-terminus: Acyl-[acyl-carrier-protein]--UDP-N-acetylglucosamine O-acyltransferase (258 aa).

This sequence belongs to the transferase hexapeptide repeat family. LpxA subfamily. As to quaternary structure, homotrimer.

The protein localises to the cytoplasm. The enzyme catalyses a (3R)-hydroxyacyl-[ACP] + UDP-N-acetyl-alpha-D-glucosamine = a UDP-3-O-[(3R)-3-hydroxyacyl]-N-acetyl-alpha-D-glucosamine + holo-[ACP]. Its pathway is glycolipid biosynthesis; lipid IV(A) biosynthesis; lipid IV(A) from (3R)-3-hydroxytetradecanoyl-[acyl-carrier-protein] and UDP-N-acetyl-alpha-D-glucosamine: step 1/6. Its function is as follows. Involved in the biosynthesis of lipid A, a phosphorylated glycolipid that anchors the lipopolysaccharide to the outer membrane of the cell. In Thiobacillus denitrificans (strain ATCC 25259 / T1), this protein is Acyl-[acyl-carrier-protein]--UDP-N-acetylglucosamine O-acyltransferase.